Reading from the N-terminus, the 299-residue chain is Methionine aminopeptidase (299 aa).

His-64 is a substrate binding site. The a divalent metal cation site is built by Asp-84, Asp-95, and His-158. His-166 contributes to the substrate binding site. Residues Glu-191 and Glu-284 each coordinate a divalent metal cation.

This sequence belongs to the peptidase M24A family. Methionine aminopeptidase archaeal type 2 subfamily. As to quaternary structure, monomer. Co(2+) serves as cofactor. Zn(2+) is required as a cofactor. Requires Mn(2+) as cofactor. It depends on Fe(2+) as a cofactor.

It carries out the reaction Release of N-terminal amino acids, preferentially methionine, from peptides and arylamides.. Functionally, removes the N-terminal methionine from nascent proteins. The N-terminal methionine is often cleaved when the second residue in the primary sequence is small and uncharged (Met-Ala-, Cys, Gly, Pro, Ser, Thr, or Val). This is Methionine aminopeptidase from Methanothermobacter thermautotrophicus (strain ATCC 29096 / DSM 1053 / JCM 10044 / NBRC 100330 / Delta H) (Methanobacterium thermoautotrophicum).